A 244-amino-acid chain; its full sequence is INO80 complex subunit E (244 aa).

Residues 10 to 54 adopt a coiled-coil conformation; the sequence is DYKKKYRNLKRKLKFLIYEHECFQEELRKAQRKLLKVSRDKSFLL. 2 disordered regions span residues 59 to 187 and 222 to 244; these read QYEN…PLTF and FSDA…DIPE. 2 stretches are compositionally biased toward low complexity: residues 99-115 and 122-136; these read PPLG…LPPS and ASRA…LASP. The segment covering 157-171 has biased composition (basic residues); it reads RPKREKRPRLPRKLK. Residues K159 and K171 each participate in a glycyl lysine isopeptide (Lys-Gly) (interchain with G-Cter in SUMO2) cross-link. Positions 230 to 244 are enriched in acidic residues; it reads DALDGDDDLVIDIPE.

Component of the chromatin remodeling INO80 complex; specifically part of a complex module associated with the N-terminus of INO80.

It localises to the nucleus. Its function is as follows. Putative regulatory component of the chromatin remodeling INO80 complex which is involved in transcriptional regulation, DNA replication and probably DNA repair. This is INO80 complex subunit E (INO80E) from Bos taurus (Bovine).